We begin with the raw amino-acid sequence, 248 residues long: UPF0246 protein RPR_00055 (248 aa).

It belongs to the UPF0246 family.

The chain is UPF0246 protein RPR_00055 from Rickettsia peacockii (strain Rustic).